Reading from the N-terminus, the 453-residue chain is Probable glycine dehydrogenase (decarboxylating) subunit 1 (453 aa).

It belongs to the GcvP family. N-terminal subunit subfamily. The glycine cleavage system is composed of four proteins: P, T, L and H. In this organism, the P 'protein' is a heterodimer of two subunits.

It carries out the reaction N(6)-[(R)-lipoyl]-L-lysyl-[glycine-cleavage complex H protein] + glycine + H(+) = N(6)-[(R)-S(8)-aminomethyldihydrolipoyl]-L-lysyl-[glycine-cleavage complex H protein] + CO2. The glycine cleavage system catalyzes the degradation of glycine. The P protein binds the alpha-amino group of glycine through its pyridoxal phosphate cofactor; CO(2) is released and the remaining methylamine moiety is then transferred to the lipoamide cofactor of the H protein. This is Probable glycine dehydrogenase (decarboxylating) subunit 1 from Dictyoglomus thermophilum (strain ATCC 35947 / DSM 3960 / H-6-12).